The chain runs to 88 residues: HssA/B-like protein 11 (88 aa).

This sequence belongs to the hssA/B family.

The sequence is that of HssA/B-like protein 11 (hssl11) from Dictyostelium discoideum (Social amoeba).